The chain runs to 446 residues: Putative RNA-ligase (446 aa).

It belongs to the asfivirus M448R family.

Its subcellular location is the virion. This is Putative RNA-ligase from African swine fever virus (isolate Tick/Malawi/Lil 20-1/1983) (ASFV).